A 246-amino-acid polypeptide reads, in one-letter code: Phosducin (246 aa).

Residues 1 to 14 (MEEAASQSLEEDFE) are compositionally biased toward acidic residues. The disordered stretch occupies residues 1–70 (MEEAASQSLE…DKDSKERMSR (70 aa)). Residues 1 to 246 (MEEAASQSLE…QTNTEDEDIE (246 aa)) enclose the Phosducin domain. The span at 58–69 (SRDDKDSKERMS) shows a compositional bias: basic and acidic residues. Ser-73 bears the Phosphoserine; by PKA mark. The tract at residues 111-246 (YGFVYELETG…QTNTEDEDIE (136 aa)) is thioredoxin fold.

It belongs to the phosducin family. In terms of assembly, interacts with CRX. Forms a complex with the beta and gamma subunits of the GTP-binding protein, transducin. Post-translationally, light-induced changes in cyclic nucleotide levels modulate the phosphorylation of this protein by cAMP kinase.

The protein resides in the cytoplasm. The protein localises to the cytosol. It localises to the nucleus. It is found in the cell projection. Its subcellular location is the cilium. The protein resides in the photoreceptor outer segment. The protein localises to the photoreceptor inner segment. In terms of biological role, inhibits the transcriptional activation activity of the cone-rod homeobox CRX. May participate in the regulation of visual phototransduction or in the integration of photoreceptor metabolism. In Rattus norvegicus (Rat), this protein is Phosducin (Pdc).